The chain runs to 1762 residues: MSVLISQSVINYVEEENIPALKALLEKCKDVDERNECGQTPLMLAAEQGNVEIVKELLKNGANCNLEDLDNWTALISASKEGHIHIVEELLKSGASLEHRDMGGWTALMWACYKGRTDVVELLLSHGANPSVTGLYSVYPIIWAAGRGHADIVHLLLQNGAKVNCSDKYGTTPLVWAARKGHLECVKHLLAMGADVDQEGANSMTALIVAVKGGYTQSVKEILKRNPNVNLTDKDGNTALMIASKEGHIEIVQDLLDAGTYVNIPDRSGDTVLIGAVRGGHVEIVRALLQKYADIDIRGQDNKTALYWAVEKGNATMVRDILQCNPDTEICTKDGETPLIKATKMRNIEVVELLLDKGAKVSAVDKKGDTPLHVAIRGRSRRLAELLLRNPKDGRLLYRPNKAGETPYNIDCSHQKSILTQIFGARHLSPTETDGDMLGYDLYSSALADILSEPTMQPPICVGLYAQWGSGKSFLLKKLEDEMKTFAGQQTEPLFQFSWLIVFLTLLLCGGLGLVFAFTVDTNLAIAISLSFLALIYIFFIVIYFGGRREGESWNWAWALSTRLARHIGYLELLFKLMFVNPPELPEQTTKALPVRFLFTDYNRLSSVGGETSLAEMIATLSDACEREFGFLATRLFRVFRTEESQGKKKWKKTCCLPSFVIFLFIVGCIIAGITLLAIFRVDPKHLTVNAILISIASVVGLAFVLNCRTWWQVLDSLLNSQRKRLHSAASKLHKLKSEGFMKVLKCEVELMARMAKTIDSFTQNQTRLVVIIDGLDACEQDKVLQMLDTVRVLFSKGPFIAIFASDPHIIIKAINQNLNSVLRDSNINGHDYMRNIVHLPVFLNSRGLSNARKFLVTSATNGDITCSDTTGTQEDTDRRVSQNSLGEMTKLGSKTALNRRDTYRRRQMQRTITRQMSFDLTKLLVTEDWFSDISPQTMRRLLNIVSVTGRLLRANQITFNWDRLASWINLTEQWPYRTSWLILYLEETEGLPDQMTLKTIYERISKNIPTTKDVEPLLEIDGDIRNFEVFLSSRTPVLVARDVKTFLPCTVNLDPKLREIIADVRAAREQINIGGLAYPPLPLHEGPPRPPSGYSQPASVCSSASFNGPFPGGVVSPQPHSSYYSGLSGPQHPFYNRPFFAPYLYTPRYYPGGSQHLISRSSVKTSLPRDQNNGLPCDSGFNKQRQAAVPATGSSLLLSSMTVDVVCEKLRQIEGLDQSMMPQYCTTIKKANINGRVLSQCNIDELKKEMAMNFGDWHLFRSMVLEMRSVESQVVPEDPRFLNENSSAPVPHGESARRSSHTELPLTELSSQTPYTLNFSFEELNTLGLDEGAPRHSNLSWQSQTRRTPSLSSLNSQDSSIEISKLTDKVQAEYRDAYREYIAQMSQLEGGTGSSTISGRSSPHSTYYIGQSSSGGSIHSTLEQERGKEGELKQEDGRKSFLMKRGDVIDYSSSGVSTNEASPLDPITEEDEKSDQSGSKLLPGKKSSERPSLFQTDLKLKGGGLRYQKLPSDEDESGTEESDNTPLLKDDKDKKAEGKAERVCKSPEHSAEPIRTFIKAKEYLSDALLDKKDSSDSGVRSNESSPNHSLHNEAADDSQLEKANLIELEDEGHSGKRGMPHSLSGLQDPIIARMSICSEDKKSPSECSLIASSPEESWPACQKAYNLNRTPSTVTLNNNTAPTNRANQNFDEIEGIRETSQVILRPGPSPNPTAVQNENLKSMAHKRSQRSSYTRLSKDASELHAASSESTGFGEERESIL.

The Cytoplasmic segment spans residues 1–508; it reads MSVLISQSVI…WLIVFLTLLL (508 aa). 11 ANK repeats span residues 45–74, 78–107, 111–140, 145–174, 178–207, 211–240, 244–273, 277–306, 310–339, 343–372, and 376–405; these read AAEQGNVEIVKELLKNGANCNLEDLDNWTA, ASKEGHIHIVEELLKSGASLEHRDMGGWTA, ACYKGRTDVVELLLSHGANPSVTGLYSVYP, AGRGHADIVHLLLQNGAKVNCSDKYGTTPL, ARKGHLECVKHLLAMGADVDQEGANSMTAL, VKGGYTQSVKEILKRNPNVNLTDKDGNTAL, SKEGHIEIVQDLLDAGTYVNIPDRSGDTVL, VRGGHVEIVRALLQKYADIDIRGQDNKTAL, VEKGNATMVRDILQCNPDTEICTKDGETPL, TKMRNIEVVELLLDKGAKVSAVDKKGDTPL, and IRGRSRRLAELLLRNPKDGRLLYRPNKAGE. Residues 440-953 enclose the KAP NTPase domain; sequence YDLYSSALAD…NIVSVTGRLL (514 aa). Residues 509–529 traverse the membrane as a helical segment; that stretch reads CGGLGLVFAFTVDTNLAIAIS. The Extracellular portion of the chain corresponds to 530-533; that stretch reads LSFL. The helical transmembrane segment at 534–554 threads the bilayer; that stretch reads ALIYIFFIVIYFGGRREGESW. Residues 555–668 lie on the Cytoplasmic side of the membrane; that stretch reads NWAWALSTRL…SFVIFLFIVG (114 aa). Residues 669–689 form a helical membrane-spanning segment; the sequence is CIIAGITLLAIFRVDPKHLTV. Residues 690-696 are Extracellular-facing; sequence NAILISI. A helical membrane pass occupies residues 697–717; that stretch reads ASVVGLAFVLNCRTWWQVLDS. Residues 718 to 1680 are Cytoplasmic-facing; the sequence is LLNSQRKRLH…TPSTVTLNNN (963 aa). Residues serine 882 and serine 885 each carry the phosphoserine modification. Residue threonine 914 is modified to Phosphothreonine. Serine 918 is subject to Phosphoserine; by PKD. Residues 1089–1092 form a mediates interaction with CRKL region; sequence PRPP. Serine 1163, serine 1288, serine 1344, serine 1351, serine 1353, serine 1354, and serine 1357 each carry phosphoserine. 4 disordered regions span residues 1279–1305, 1336–1358, 1390–1440, and 1452–1556; these read DPRFLNENSSAPVPHGESARRSSHTEL, RHSNLSWQSQTRRTPSLSSLNSQ, EGGT…DGRK, and YSSS…EPIR. Polar residues predominate over residues 1338–1350; it reads SNLSWQSQTRRTP. A compositionally biased stretch (low complexity) spans 1395–1422; sequence SSTISGRSSPHSTYYIGQSSSGGSIHST. Residues 1423–1440 are compositionally biased toward basic and acidic residues; the sequence is LEQERGKEGELKQEDGRK. Polar residues predominate over residues 1452–1462; the sequence is YSSSGVSTNEA. A phosphoserine mark is found at serine 1513, serine 1518, serine 1547, and serine 1566. A compositionally biased stretch (acidic residues) spans 1514-1524; it reads DEDESGTEESD. The segment covering 1529-1553 has biased composition (basic and acidic residues); the sequence is LKDDKDKKAEGKAERVCKSPEHSAE. The disordered stretch occupies residues 1571 to 1628; that stretch reads DKKDSSDSGVRSNESSPNHSLHNEAADDSQLEKANLIELEDEGHSGKRGMPHSLSGLQ. The span at 1579–1590 shows a compositional bias: polar residues; that stretch reads GVRSNESSPNHS. A phosphoserine mark is found at serine 1615 and serine 1625. A Phosphothreonine modification is found at threonine 1671. Serine 1673 carries the post-translational modification Phosphoserine. Threonine 1676 carries the post-translational modification Phosphothreonine. The segment at 1704–1762 is disordered; it reads ILRPGPSPNPTAVQNENLKSMAHKRSQRSSYTRLSKDASELHAASSESTGFGEERESIL. Positions 1757 to 1762 match the PDZ-binding motif; the sequence is ERESIL.

In terms of assembly, found in a complex, at least composed of KIDINS220, MAGI2, NTRK1 and RAPGEF2; the complex is mainly formed at late endosomes in a nerve growth factor (NGF)-dependent manner. Interacts with RAPGEF2; the interaction is strengthened after NGF stimulation. Isoform 2 interacts (via C-terminal domain) with MAGI2 isoform 1 (via PDZ domain). Interacts with NTRK1, NTRK2, NTRK3, ERKL and NGFR. Can form a ternary complex with NGFR and NTRK1 and this complex is affected by the expression levels of KIDINS220/ARMS. An increase in KIDINS220/ARMS expression leads to a decreased association of NGFR and NTRK1. Interacts (via PDZ-binding motif) with SNTA1 and SNTB2 (via PDZ domains). Interacts with EPHA4 and PRKD1. In terms of processing, tyrosine phosphorylated by NTRK1, NTRK2, EPHB2 and EPHA4. Phosphorylation at Ser-918 is induced by phorbol ester treatment. Phosphorylation by NTRK2 is induced by brain-derived neurotrophic factor (BDNF) and neurotrophin-4/5. Phosphorylation by NTRK1 is induced by nerve growth factor (NGF). Expressed in developing nervous system and in highly plastic areas of the adult brain. Also expressed in neuroendocrine cells, where it concentrates at the tip of neurites. Expressed in developing muscle and is concentrated at the neuromuscular junction (NMS). SNTA1 can regulate its localization in the NMS.

It is found in the membrane. The protein localises to the late endosome. Its function is as follows. Promotes a prolonged MAP-kinase signaling by neurotrophins through activation of a Rap1-dependent mechanism. Provides a docking site for the CRKL-C3G complex, resulting in Rap1-dependent sustained ERK activation. May play an important role in regulating postsynaptic signal transduction through the syntrophin-mediated localization of receptor tyrosine kinases such as EPHA4. In cooperation with SNTA1 can enhance EPHA4-induced JAK/STAT activation. Plays a role in nerve growth factor (NGF)-induced recruitment of RAPGEF2 to late endosomes and neurite outgrowth. May play a role in neurotrophin- and ephrin-mediated neuronal outgrowth and in axon guidance during neural development and in neuronal regeneration. This is Kinase D-interacting substrate of 220 kDa (Kidins220) from Rattus norvegicus (Rat).